The following is a 262-amino-acid chain: Hydroxyethylthiazole kinase (262 aa).

Met-50 provides a ligand contact to substrate. Residues Arg-125 and Thr-171 each contribute to the ATP site. Residue Gly-198 participates in substrate binding.

This sequence belongs to the Thz kinase family. Mg(2+) is required as a cofactor.

The catalysed reaction is 5-(2-hydroxyethyl)-4-methylthiazole + ATP = 4-methyl-5-(2-phosphooxyethyl)-thiazole + ADP + H(+). It participates in cofactor biosynthesis; thiamine diphosphate biosynthesis; 4-methyl-5-(2-phosphoethyl)-thiazole from 5-(2-hydroxyethyl)-4-methylthiazole: step 1/1. In terms of biological role, catalyzes the phosphorylation of the hydroxyl group of 4-methyl-5-beta-hydroxyethylthiazole (THZ). This is Hydroxyethylthiazole kinase from Escherichia coli O45:K1 (strain S88 / ExPEC).